We begin with the raw amino-acid sequence, 333 residues long: Phosphate acyltransferase (333 aa).

The protein belongs to the PlsX family. As to quaternary structure, homodimer. Probably interacts with PlsY.

Its subcellular location is the cytoplasm. It catalyses the reaction a fatty acyl-[ACP] + phosphate = an acyl phosphate + holo-[ACP]. It functions in the pathway lipid metabolism; phospholipid metabolism. In terms of biological role, catalyzes the reversible formation of acyl-phosphate (acyl-PO(4)) from acyl-[acyl-carrier-protein] (acyl-ACP). This enzyme utilizes acyl-ACP as fatty acyl donor, but not acyl-CoA. This Cellvibrio japonicus (strain Ueda107) (Pseudomonas fluorescens subsp. cellulosa) protein is Phosphate acyltransferase.